The chain runs to 116 residues: Photosystem II assembly factor Psb28 protein (116 aa).

This sequence belongs to the Psb28 family. Part of a photosystem II (PSII) assembly intermediate complex PSII-I; crystallized from a strain deleted of psbJ, it forms monomeric PSII before addition of the oxygen evolving complex. PSII-I includes 3 assembly factors not found in mature PSII (Psb27, Psb28 and Psb34). This protein binds to the cytoplasmic face of D1 and D2 (psbA and psbD), contacting CP47 (psbB) directly above the quinone b-binding site.

It localises to the cellular thylakoid membrane. A photosystem II (PSII) assembly factor that binds PSII during biogenesis, protecting the complex until water splitting is activated. This Thermosynechococcus vestitus (strain NIES-2133 / IAM M-273 / BP-1) protein is Photosystem II assembly factor Psb28 protein.